The primary structure comprises 188 residues: Elongation factor P (188 aa).

Residue K34 is modified to N6-(3,6-diaminohexanoyl)-5-hydroxylysine.

The protein belongs to the elongation factor P family. In terms of processing, may be beta-lysylated on the epsilon-amino group of Lys-34 by the combined action of EpmA and EpmB, and then hydroxylated on the C5 position of the same residue by EpmC (if this protein is present). Lysylation is critical for the stimulatory effect of EF-P on peptide-bond formation. The lysylation moiety may extend toward the peptidyltransferase center and stabilize the terminal 3-CCA end of the tRNA. Hydroxylation of the C5 position on Lys-34 may allow additional potential stabilizing hydrogen-bond interactions with the P-tRNA.

The protein localises to the cytoplasm. Its pathway is protein biosynthesis; polypeptide chain elongation. Involved in peptide bond synthesis. Alleviates ribosome stalling that occurs when 3 or more consecutive Pro residues or the sequence PPG is present in a protein, possibly by augmenting the peptidyl transferase activity of the ribosome. Modification of Lys-34 is required for alleviation. The protein is Elongation factor P of Aliivibrio fischeri (strain ATCC 700601 / ES114) (Vibrio fischeri).